Here is a 215-residue protein sequence, read N- to C-terminus: Putative B3 domain-containing protein Os11g0625400 (215 aa).

Positions 1–51 form a DNA-binding region, TF-B3 1; it reads MTVELEKIAGSFFISKGWKTFVHRTGLLSGQYIRFQVLTPSKINVLLFDKK. The segment at 92-117 is disordered; it reads SHTSNKETSSDSRTESMTDIPSSSDN. Basic and acidic residues predominate over residues 95-107; that stretch reads SNKETSSDSRTES. Polar residues predominate over residues 108–117; the sequence is MTDIPSSSDN. Residues 123 to 215 constitute a DNA-binding region (TF-B3 2); that stretch reads DIKNYISIIG…PNVKITIDVL (93 aa).

It localises to the nucleus. The protein is Putative B3 domain-containing protein Os11g0625400 of Oryza sativa subsp. japonica (Rice).